Here is a 962-residue protein sequence, read N- to C-terminus: Putative primase C962R (962 aa).

One can recognise an SF3 helicase domain in the interval 607–775 (ELDARLWIMF…PDPGNPYEKK (169 aa)). 636–643 (GGGCNGKT) serves as a coordination point for ATP.

Belongs to the asfivirus helicase C962R family.

The chain is Putative primase C962R from African swine fever virus (strain Badajoz 1971 Vero-adapted) (Ba71V).